The following is an 826-amino-acid chain: Lysine-specific histone demethylase 1B (826 aa).

Residues 1–11 (MAASRGRSKKR) show a composition bias toward basic residues. Residues 1 to 46 (MAASRGRSKKRSNLELSPDNLPLRSSGRQAKKKAVEIPDEDEDGSS) are disordered. 2 positions are modified to phosphoserine: Ser-17 and Ser-26. Residues Cys-53, Cys-58, Cys-65, Cys-73, His-84, His-90, Cys-92, Cys-95, Cys-142, Cys-147, Cys-169, and Cys-185 each contribute to the Zn(2+) site. The CW-type zinc-finger motif lies at 133–193 (DQQLPYWVQC…HCSFPEDLRV (61 aa)). The residue at position 253 (Ser-253) is a Phosphoserine. A GLYR1-binding region spans residues 279-298 (YQPNECGKALCVRPDVMELD). The 99-residue stretch at 281-379 (PNECGKALCV…TGVLTVAAGQ (99 aa)) folds into the SWIRM domain. Residue 389 to 445 (KSVLVVGAGPAGLAAARQLHNFGMKVTVLEAKDRIGGRVWDDKSFKGVVVGRGPQIV) participates in FAD binding. Histone H3-binding regions lie at residues 444 to 473 (IVNGCINNPVALMCEQLGISMRKLGERCDL), 493 to 504 (FNALLDVVSEWR), and 544 to 578 (FHLSNLEYACGSSLHQVSARSWDHNEFFAQFAGDH). The GLYR1-binding stretch occupies residues 570-572 (FFA). FAD is bound by residues Val-604, Glu-799, and 807–809 (QTV). Residues 802–818 (NRHFPQTVTGAYLSGVR) are GLYR1-binding.

This sequence belongs to the flavin monoamine oxidase family. In terms of assembly, interacts with its cofactor GLYR1 at nucleosomes; this interaction stimulates H3K4me1 and H3K4me2 demethylation. In contrast to KDM1A, does not form a complex with RCOR1/CoREST. Possible accessory component of the polycomb repressive deubiquitinase (PR-DUB) complex, at least composed of BAP1, one of ASXL1, ASXL2 or (probably) ASXL3 and one of MBD5 or MBD6. The PR-DUB core associates with a number of accessory proteins, including FOXK1, FOXK2, KDM1B, HCFC1 and OGT; KDM1B specifically associates with ASXL2 PR-DUB complexes. Requires FAD as cofactor. The cofactor is Zn(2+). As to expression, expressed in growing oocytes and in intestinal gland.

It is found in the nucleus. It localises to the chromosome. The catalysed reaction is N(6),N(6)-dimethyl-L-lysyl(4)-[histone H3] + 2 A + 2 H2O = L-lysyl(4)-[histone H3] + 2 formaldehyde + 2 AH2. It carries out the reaction N(6)-methyl-L-lysyl(4)-[histone H3] + A + H2O = L-lysyl(4)-[histone H3] + formaldehyde + AH2. Inhibited by tranylcypromine, but not by pargyline, deprenyl or rasagiline. Histone H3K4me1 and H3K4me2 demethylase activity is inhibited by DNA, this inhibition is released in complex with GLYR1. Functionally, histone demethylase that demethylates 'Lys-4' of histone H3, a specific tag for epigenetic transcriptional activation, thereby acting as a corepressor. Required for de novo DNA methylation of a subset of imprinted genes during oogenesis. Acts by oxidizing the substrate by FAD to generate the corresponding imine that is subsequently hydrolyzed. Demethylates both mono- and di-methylated 'Lys-4' of histone H3. Has no effect on tri-methylated 'Lys-4', mono-, di- or tri-methylated 'Lys-9', mono-, di- or tri-methylated 'Lys-27', mono-, di- or tri-methylated 'Lys-36' of histone H3, or on mono-, di- or tri-methylated 'Lys-20' of histone H4. In terms of biological role, histone demethylase that demethylates 'Lys-4' of histone H3, a specific tag for epigenetic transcriptional activation, thereby acting as a corepressor. Required for de novo DNA methylation of a subset of imprinted genes during oogenesis. Acts by oxidizing the substrate by FAD to generate the corresponding imine that is subsequently hydrolyzed. Demethylates both mono- and di-methylated 'Lys-4' of histone H3. Has no effect on tri-methylated 'Lys-4', mono-, di- or tri-methylated 'Lys-9', mono-, di- or tri-methylated 'Lys-27', mono-, di- or tri-methylated 'Lys-36' of histone H3, or on mono-, di- or tri-methylated 'Lys-20' of histone H4. Alone, it is unable to demethylate H3K4me on nucleosomes and requires the presence of GLYR1 to achieve such activity, they form a multifunctional enzyme complex that modifies transcribed chromatin and facilitates Pol II transcription through nucleosomes. In Mus musculus (Mouse), this protein is Lysine-specific histone demethylase 1B.